Reading from the N-terminus, the 483-residue chain is ATP-dependent RNA helicase DDX25 (483 aa).

Residues K97–E125 carry the Q motif motif. One can recognise a Helicase ATP-binding domain in the interval M130–I300. Residue S143–T150 coordinates ATP. The short motif at D247–D250 is the DEAD box element. The 168-residue stretch at N311–M478 folds into the Helicase C-terminal domain.

Belongs to the DEAD box helicase family. As to expression, an mRNA component of germ plasm. Localizes to the granulo-fibrillar material (GFM) of the mitochondrial cloud in stage I oocytes. Associated, at a low level, with the periphery of mature germinal granules in later stage oocytes. Localizes to the vegetal cortex in stage II oocytes and segregates with germ plasm during early embryogenesis. In adults, expression is restricted to the ovary and, at a lower level, to spermatogonia, spermatocytes and spermatids of the testis.

It localises to the cytoplasm. It is found in the nucleus. It catalyses the reaction ATP + H2O = ADP + phosphate + H(+). ATP-dependent RNA helicase. In Xenopus laevis (African clawed frog), this protein is ATP-dependent RNA helicase DDX25.